Consider the following 143-residue polypeptide: 5-hydroxymethyl-dUMP N-hydrolase (143 aa).

5-hydroxymethyl-dUMP is bound by residues G7, I9, R10, G11, S77, G79, E83, and S107.

The protein belongs to the 2'-deoxynucleoside 5'-phosphate N-hydrolase 1 family. In terms of assembly, monomer and homodimer.

It localises to the cytoplasm. Its subcellular location is the nucleus. The enzyme catalyses 5-hydroxymethyl-dUMP + H2O = 5-hydroxymethyluracil + 2-deoxy-D-ribose 5-phosphate. Functionally, part of a nucleotide salvage pathway that eliminates epigenetically modified 5-hydroxymethyl-dCMP (hmdCMP) in a two-step process entailing deamination to cytotoxic 5-hydroxymethyl-dUMP (hmdUMP), followed by its hydrolysis into 5-hydroxymethyluracil (hmU) and 2-deoxy-D-ribose 5-phosphate (deoxyribosephosphate). The sequence is that of 5-hydroxymethyl-dUMP N-hydrolase (dnph1) from Danio rerio (Zebrafish).